A 49-amino-acid chain; its full sequence is Small, acid-soluble spore protein O (49 aa).

A disordered region spans residues 23 to 49 (AGYNEKFSNEPLTEAQRQNNKKRKKNQ).

Belongs to the SspO family.

It is found in the spore core. In Geobacillus thermodenitrificans (strain NG80-2), this protein is Small, acid-soluble spore protein O.